Consider the following 163-residue polypeptide: D-aminoacyl-tRNA deacylase (163 aa).

The Gly-cisPro motif, important for rejection of L-amino acids signature appears at 141–142; the sequence is GP.

This sequence belongs to the DTD family. As to quaternary structure, homodimer.

The protein resides in the cytoplasm. It catalyses the reaction glycyl-tRNA(Ala) + H2O = tRNA(Ala) + glycine + H(+). The catalysed reaction is a D-aminoacyl-tRNA + H2O = a tRNA + a D-alpha-amino acid + H(+). An aminoacyl-tRNA editing enzyme that deacylates mischarged D-aminoacyl-tRNAs. Also deacylates mischarged glycyl-tRNA(Ala), protecting cells against glycine mischarging by AlaRS. Acts via tRNA-based rather than protein-based catalysis; rejects L-amino acids rather than detecting D-amino acids in the active site. By recycling D-aminoacyl-tRNA to D-amino acids and free tRNA molecules, this enzyme counteracts the toxicity associated with the formation of D-aminoacyl-tRNA entities in vivo and helps enforce protein L-homochirality. The sequence is that of D-aminoacyl-tRNA deacylase from Neisseria gonorrhoeae (strain ATCC 700825 / FA 1090).